Consider the following 25-residue polypeptide: Antimicrobial peptide scolopin-2 (25 aa).

Expressed by the venom gland.

Its subcellular location is the secreted. In terms of biological role, antimicrobial peptide against both Gram-positive, -negative and yeast. Also induces histamine release by mast cells and shows moderate hemolytic activities against both human and rabbit red cells. The polypeptide is Antimicrobial peptide scolopin-2 (Scolopendra mutilans (Chinese red-headed centipede)).